The sequence spans 185 residues: Bacteriocin UviA (185 aa).

Its function is as follows. May have a role in bacteriocin secretion or immunity. The sequence is that of Bacteriocin UviA (uviA) from Clostridium perfringens.